Reading from the N-terminus, the 446-residue chain is Tubulin beta-4 chain (446 aa).

8 residues coordinate GTP: Gln11, Glu69, Ser138, Gly142, Thr143, Gly144, Asn204, and Asn226. Glu69 contributes to the Mg(2+) binding site. The span at 417–426 (DLVSEYQQYQ) shows a compositional bias: polar residues. The segment at 417-446 (DLVSEYQQYQDATADEEGDYEDEDEALHDE) is disordered. Residues 429-446 (TADEEGDYEDEDEALHDE) show a composition bias toward acidic residues.

Belongs to the tubulin family. In terms of assembly, dimer of alpha and beta chains. A typical microtubule is a hollow water-filled tube with an outer diameter of 25 nm and an inner diameter of 15 nM. Alpha-beta heterodimers associate head-to-tail to form protofilaments running lengthwise along the microtubule wall with the beta-tubulin subunit facing the microtubule plus end conferring a structural polarity. Microtubules usually have 13 protofilaments but different protofilament numbers can be found in some organisms and specialized cells. Requires Mg(2+) as cofactor.

The protein resides in the cytoplasm. The protein localises to the cytoskeleton. In terms of biological role, tubulin is the major constituent of microtubules, a cylinder consisting of laterally associated linear protofilaments composed of alpha- and beta-tubulin heterodimers. Microtubules grow by the addition of GTP-tubulin dimers to the microtubule end, where a stabilizing cap forms. Below the cap, tubulin dimers are in GDP-bound state, owing to GTPase activity of alpha-tubulin. The polypeptide is Tubulin beta-4 chain (TUBB4) (Eleusine indica (Goosegrass)).